The chain runs to 202 residues: Ribosome maturation factor RimM (202 aa).

A PRC barrel domain is found at 121–202; that stretch reads KDEYYWVDLI…CITVDWQPDY (82 aa).

The protein belongs to the RimM family. Binds ribosomal protein uS19.

The protein resides in the cytoplasm. Functionally, an accessory protein needed during the final step in the assembly of 30S ribosomal subunit, possibly for assembly of the head region. Essential for efficient processing of 16S rRNA. May be needed both before and after RbfA during the maturation of 16S rRNA. It has affinity for free ribosomal 30S subunits but not for 70S ribosomes. This chain is Ribosome maturation factor RimM, found in Polaromonas sp. (strain JS666 / ATCC BAA-500).